The primary structure comprises 484 residues: Protein phosphatase 1B (484 aa).

Positions 1–14 (MGAFLDKPKTEKHN) are enriched in basic and acidic residues. Residues 1–20 (MGAFLDKPKTEKHNAHGAGN) are disordered. The N-myristoyl glycine moiety is linked to residue G2. K12 is covalently cross-linked (Glycyl lysine isopeptide (Lys-Gly) (interchain with G-Cter in ISG15)). Residues 23–295 (RYGLSSMQGW…DNMSIVLVCF (273 aa)) form the PPM-type phosphatase domain. D60 and G61 together coordinate Mn(2+). Residue K142 forms a Glycyl lysine isopeptide (Lys-Gly) (interchain with G-Cter in ISG15) linkage. Mn(2+)-binding residues include D243 and D286. A Phosphoserine modification is found at S391. A disordered region spans residues 431 to 484 (EENPAEQAATAASSNSDAGNTVAMQESHTESKSDLAELDSCTEDAGTKMSGEKL). Polar residues predominate over residues 440–456 (TAASSNSDAGNTVAMQE).

Belongs to the PP2C family. In terms of assembly, monomer. Interacts with PAK6. Interacts with the phosphorylated form of IKBKB/IKKB. Mg(2+) serves as cofactor. It depends on Mn(2+) as a cofactor. Post-translationally, isgylation negatively regulates its activity. In terms of processing, N-myristoylation is essential for the recognition of its substrates for dephosphorylation.

The protein localises to the cytoplasm. Its subcellular location is the cytosol. It localises to the membrane. It carries out the reaction O-phospho-L-seryl-[protein] + H2O = L-seryl-[protein] + phosphate. The enzyme catalyses O-phospho-L-threonyl-[protein] + H2O = L-threonyl-[protein] + phosphate. Enzyme with a broad specificity. Dephosphorylates PRKAA1 and PRKAA2. Inhibits TBK1-mediated antiviral signaling by dephosphorylating it at 'Ser-172'. Plays an important role in the termination of TNF-alpha-mediated NF-kappa-B activation through dephosphorylating and inactivating IKBKB/IKKB. The protein is Protein phosphatase 1B (PPM1B) of Bos taurus (Bovine).